A 184-amino-acid chain; its full sequence is UPF0301 protein SPO0296 (184 aa).

Belongs to the UPF0301 (AlgH) family.

This is UPF0301 protein SPO0296 from Ruegeria pomeroyi (strain ATCC 700808 / DSM 15171 / DSS-3) (Silicibacter pomeroyi).